The following is a 240-amino-acid chain: UPF0502 protein Veis_2102 (240 aa).

The protein belongs to the UPF0502 family.

The chain is UPF0502 protein Veis_2102 from Verminephrobacter eiseniae (strain EF01-2).